A 407-amino-acid polypeptide reads, in one-letter code: Probable tRNA pseudouridine synthase D (407 aa).

Asp81 functions as the Nucleophile in the catalytic mechanism. The TRUD domain maps to 151–372 (GFPNYFGIQR…PGGRRELLIR (222 aa)).

The protein belongs to the pseudouridine synthase TruD family.

The enzyme catalyses uridine(13) in tRNA = pseudouridine(13) in tRNA. Could be responsible for synthesis of pseudouridine from uracil-13 in transfer RNAs. This is Probable tRNA pseudouridine synthase D from Pyrococcus furiosus (strain ATCC 43587 / DSM 3638 / JCM 8422 / Vc1).